Reading from the N-terminus, the 100-residue chain is Co-chaperonin GroES (100 aa).

The protein belongs to the GroES chaperonin family. As to quaternary structure, heptamer of 7 subunits arranged in a ring. Interacts with the chaperonin GroEL.

The protein localises to the cytoplasm. Functionally, together with the chaperonin GroEL, plays an essential role in assisting protein folding. The GroEL-GroES system forms a nano-cage that allows encapsulation of the non-native substrate proteins and provides a physical environment optimized to promote and accelerate protein folding. GroES binds to the apical surface of the GroEL ring, thereby capping the opening of the GroEL channel. The chain is Co-chaperonin GroES from Mycobacterium leprae (strain Br4923).